Here is a 447-residue protein sequence, read N- to C-terminus: MAFVVPAAPPRTPHKFYQILYVQVLVAIVAGVLLGHFYPDLGSALKPLGDAFIKLVKMIIAPVIFLTVVTGIAGLTDMQKVGRVAGKAMIYFLSFSTLALIIGMIVANVVHPGSGLNIDPASLDAKAVQTYTSHAHDQSLVGFLMNIIPSTPISAFASGDILQVLFFAVLFGIALATVGERGKPVLDLLNPLLQVVFRLVAIVMKAAPLGAFGAMAFTIGKYGIGSIANLAMLVGTFYLTSGLFVFVVLGLVARYNGFSLLALLRYIKEELLLVLGTSSSEAALPTLMEKLERAGCKKSVVGLVVPTGYSFNLDGTNIYMTLAALFIAQATNIDLSLQDQILLLLVAMLSSKGAAGITGAGFITLAATLSVVPSVPVAGMALILGVDRFMSECRALTNFIGNAVATIVVAKWEGELDRDRLALALKGGGKALLPLEHEAAIHIPSKV.

The next 8 helical transmembrane spans lie at 19-39 (ILYV…HFYP), 55-75 (LVKM…IAGL), 90-110 (IYFL…ANVV), 155-175 (AFAS…GIAL), 199-219 (LVAI…AFTI), 232-252 (MLVG…LGLV), 343-363 (LLLV…AGFI), and 366-386 (AATL…ILGV).

Belongs to the dicarboxylate/amino acid:cation symporter (DAACS) (TC 2.A.23) family.

It is found in the cell inner membrane. Responsible for the transport of dicarboxylates such as succinate, fumarate, and malate from the periplasm across the membrane. This chain is C4-dicarboxylate transport protein, found in Rhodospirillum rubrum (strain ATCC 11170 / ATH 1.1.1 / DSM 467 / LMG 4362 / NCIMB 8255 / S1).